Here is a 35-residue protein sequence, read N- to C-terminus: Conotoxin Cal6.1f (35 aa).

Residues 1-8 constitute a propeptide that is removed on maturation; it reads GLIRPSKR. 3 disulfide bridges follow: C9–C25, C16–C29, and C24–C34.

It belongs to the conotoxin O1 superfamily. In terms of tissue distribution, expressed by the venom duct.

The protein resides in the secreted. Its function is as follows. Probable neurotoxin with unknown target. Possibly targets ion channels. The sequence is that of Conotoxin Cal6.1f from Californiconus californicus (California cone).